The chain runs to 611 residues: DNA-directed RNA polymerase subunit Rpo2C (611 aa).

Residues Cys547, Cys550, Cys565, and Cys568 each contribute to the Zn(2+) site.

Belongs to the RNA polymerase beta chain family. As to quaternary structure, part of the RNA polymerase complex. Zn(2+) serves as cofactor.

The protein resides in the cytoplasm. The catalysed reaction is RNA(n) + a ribonucleoside 5'-triphosphate = RNA(n+1) + diphosphate. DNA-dependent RNA polymerase (RNAP) catalyzes the transcription of DNA into RNA using the four ribonucleoside triphosphates as substrates. The Rpo2 subunit (Rpo2N and Rpo2C in this organism) is implicated in DNA promoter recognition and in nucleotide binding. This Methanococcus vannielii (strain ATCC 35089 / DSM 1224 / JCM 13029 / OCM 148 / SB) protein is DNA-directed RNA polymerase subunit Rpo2C.